Consider the following 431-residue polypeptide: Glucose-1-phosphate adenylyltransferase (431 aa).

K39 is a binding site for beta-D-fructose 1,6-bisphosphate. R40, H46, and R52 together coordinate AMP. Y114 lines the alpha-D-glucose 1-phosphate pocket. Position 130 (R130) interacts with AMP. Alpha-D-glucose 1-phosphate contacts are provided by residues G179, 194–195, and S212; that span reads EK. An AMP-binding site is contributed by R386. Beta-D-fructose 1,6-bisphosphate is bound at residue 429–431; the sequence is QER.

It belongs to the bacterial/plant glucose-1-phosphate adenylyltransferase family. In terms of assembly, homotetramer.

The enzyme catalyses alpha-D-glucose 1-phosphate + ATP + H(+) = ADP-alpha-D-glucose + diphosphate. It participates in glycan biosynthesis; glycogen biosynthesis. Its activity is regulated as follows. Allosterically activated by fructose-1,6-bisphosphate (F16BP) and inhibited by AMP. Its function is as follows. Involved in the biosynthesis of ADP-glucose, a building block required for the elongation reactions to produce glycogen. Catalyzes the reaction between ATP and alpha-D-glucose 1-phosphate (G1P) to produce pyrophosphate and ADP-Glc. The sequence is that of Glucose-1-phosphate adenylyltransferase from Klebsiella pneumoniae subsp. pneumoniae (strain ATCC 700721 / MGH 78578).